A 302-amino-acid polypeptide reads, in one-letter code: 33 kDa chaperonin (302 aa).

2 disulfides stabilise this stretch: cysteine 255/cysteine 257 and cysteine 288/cysteine 291.

The protein belongs to the HSP33 family. Post-translationally, under oxidizing conditions two disulfide bonds are formed involving the reactive cysteines. Under reducing conditions zinc is bound to the reactive cysteines and the protein is inactive.

The protein resides in the cytoplasm. Its function is as follows. Redox regulated molecular chaperone. Protects both thermally unfolding and oxidatively damaged proteins from irreversible aggregation. Plays an important role in the bacterial defense system toward oxidative stress. In Caulobacter vibrioides (strain ATCC 19089 / CIP 103742 / CB 15) (Caulobacter crescentus), this protein is 33 kDa chaperonin.